The sequence spans 465 residues: tRNA (guanine(37)-N(1))-methyltransferase (465 aa).

Residues histidine 189, 227 to 228, and 255 to 256 contribute to the S-adenosyl-L-methionine site; these read DL and DA. A disordered region spans residues 283-362; the sequence is YPKEGVPANE…GPGPPPSKPW (80 aa). The span at 291–320 shows a compositional bias: polar residues; it reads NENSSSNGNHNDVREGSQNGANESSVASTT. The span at 343-352 shows a compositional bias: basic residues; sequence TKRRNNKRVR. Asparagine 371 is an S-adenosyl-L-methionine binding site.

Belongs to the class I-like SAM-binding methyltransferase superfamily. TRM5/TYW2 family. Monomer.

Its subcellular location is the mitochondrion matrix. It is found in the nucleus. The protein resides in the cytoplasm. It catalyses the reaction guanosine(37) in tRNA + S-adenosyl-L-methionine = N(1)-methylguanosine(37) in tRNA + S-adenosyl-L-homocysteine + H(+). Specifically methylates the N1 position of guanosine-37 in various cytoplasmic and mitochondrial tRNAs. Methylation is not dependent on the nature of the nucleoside 5' of the target nucleoside. This is the first step in the biosynthesis of wybutosine (yW), a modified base adjacent to the anticodon of tRNAs and required for accurate decoding. The chain is tRNA (guanine(37)-N(1))-methyltransferase from Sorghum bicolor (Sorghum).